The following is a 237-amino-acid chain: BTB/POZ domain-containing protein KCTD6 (237 aa).

Residues Met-1 to Cys-104 form an interaction with ANK1 isoform Mu7 region. The segment at Met-10 to Pro-110 is interaction with CUL3. Positions Asp-12–Leu-81 constitute a BTB domain. Positions Pro-113–Glu-187 are interaction with USP21.

Homopentamer. Interacts with KCTD11; KCTD6 and KCTD11 may associate in heteropentameric assemblies. Interacts (via BTB domain) with CUL3; initially a 4:4 stoichiometry has been reported, however, electron microscopy revealed pentameric states with a five-pointed pinwheel shape. The interaction with CUL3 is indicative for a participation in a BCR (BTB-CUL3-RBX1) E3 ubiquitin-protein ligase complex. Interacts with HDAC1; probably indirect as the interaction requires the presence of KCTD11. Interacts with USP21 (preferentially catalytic inactive form). Interacts with ANK1 isoform Mu7; detected in striated muscle. Interacts with USP11. Highly expressed in cerebellum and brain.

The protein resides in the cytoplasm. It is found in the myofibril. Its subcellular location is the sarcomere. The protein localises to the m line. It functions in the pathway protein modification; protein ubiquitination. Functionally, probable substrate-specific adapter of a BCR (BTB-CUL3-RBX1) E3 ubiquitin-protein ligase complex mediating the ubiquitination and subsequent proteasomal degradation of target proteins. Promotes the ubiquitination of HDAC1; the function seems to depend on KCTD11:KCTD6 oligomerization. Can function as antagonist of the Hedgehog pathway by affecting the nuclear transfer of transcription factor GLI1; the function probably occurs via HDAC1 down-regulation, keeping GLI1 acetylated and inactive. Inhibits cell growth and tumorigenicity of medulloblastoma (MDB). Involved in regulating protein levels of ANK1 isoform Mu7 probably implicating CUL3-dependent proteasomal degradation. In Mus musculus (Mouse), this protein is BTB/POZ domain-containing protein KCTD6 (Kctd6).